Here is a 394-residue protein sequence, read N- to C-terminus: Gap junction gamma-1 protein (394 aa).

The Cytoplasmic segment spans residues 1–22 (MSWSFLTRLLEEIHNHSTFVGK). The helical transmembrane segment at 23 to 45 (IWLSVLIVFRIVLTAVGGESIYY) threads the bilayer. The Extracellular portion of the chain corresponds to 46–75 (DEQSKFVCNTEQPGCENVCYDAFAPLSHVR). Residues 76–95 (FWVFQIILVATPSVMYLGYA) form a helical membrane-spanning segment. Topologically, residues 96-176 (IHKIARMVEH…RRIREDGLMR (81 aa)) are cytoplasmic. A helical membrane pass occupies residues 177-199 (IYVLQLLVRATFEVGFLIGQYLL). The Extracellular segment spans residues 200–229 (YGFEVSPVFVCSRKPCPHKIDCFISRPTEK). A helical transmembrane segment spans residues 230-252 (TIFLLIMYGVSCMCLLLNVWEML). At 253–394 (HLGFGTIRDT…SGDGKNSVWI (142 aa)) the chain is on the cytoplasmic side. The tract at residues 354–394 (IQAYNNQNNPGSSSREKKSKAGSNKSSASSKSGDGKNSVWI) is disordered. Polar residues predominate over residues 356 to 366 (AYNNQNNPGSS). The segment covering 374–394 (AGSNKSSASSKSGDGKNSVWI) has biased composition (low complexity).

Belongs to the connexin family. Gamma-type subfamily. In terms of assembly, a connexon is composed of a hexamer of connexins. As to expression, mostly in heart and stomach.

It is found in the cell membrane. Its subcellular location is the cell junction. The protein resides in the gap junction. Functionally, one gap junction consists of a cluster of closely packed pairs of transmembrane channels, the connexons, through which materials of low MW diffuse from one cell to a neighboring cell. In Gallus gallus (Chicken), this protein is Gap junction gamma-1 protein (GJC1).